Consider the following 250-residue polypeptide: Heat stress transcription factor C-1b (250 aa).

A coiled-coil region spans residues Glu129–Glu182. The interval Leu144 to Ala180 is hydrophobic repeat HR-A/B. The segment at Ala199–Gly226 is disordered. The Nuclear localization signal motif lies at Lys209–Arg212.

This sequence belongs to the HSF family. Class C subfamily. Homotrimer. In terms of processing, exhibits temperature-dependent phosphorylation.

The protein resides in the nucleus. Transcriptional regulator that specifically binds DNA of heat shock promoter elements (HSE). The polypeptide is Heat stress transcription factor C-1b (HSFC1B) (Oryza sativa subsp. japonica (Rice)).